Here is a 201-residue protein sequence, read N- to C-terminus: Recombination protein RecR (201 aa).

Residues 59–74 (CEICGNMDTENMCRIC) form a C4-type zinc finger. The Toprim domain maps to 82 to 177 (SIIAIVETVA…KISRLASGIP (96 aa)).

The protein belongs to the RecR family.

May play a role in DNA repair. It seems to be involved in an RecBC-independent recombinational process of DNA repair. It may act with RecF and RecO. This is Recombination protein RecR from Rickettsia africae (strain ESF-5).